The sequence spans 284 residues: MNPFLKLVRIHNVIGAGLGAFTGYVASSMWKIDPTELILAVLVVALVDAGGNAINDVYDVEIDRINKPDRPIPSGAVSLRTATSLSYGLMGVGVILSALQGYLQFLVALLTSVALIFYARDLKRTGIYGNLVVATATALSLFYGGLSYHEGDWLQRIWIPVLYTFLLTLSREIVKGIEDYRGDLANHVNTLATTRGIASAWRVARVALIITEVTSPLPLFLGYNILYGIVLVPFLYITTKAVLAETSEEGASKARSLLKGSAFLGMVAFALGSLPFQFLFHYLP.

The next 7 membrane-spanning stretches (helical) occupy residues Ile10–Trp30, Leu37–Val57, Ala76–Ala98, Tyr102–Ala119, Gly126–Leu146, Leu217–Ile237, and Gly260–Phe280.

It belongs to the UbiA prenyltransferase family. DGGGP synthase subfamily. The cofactor is Mg(2+).

The protein resides in the cell membrane. The enzyme catalyses sn-3-O-(geranylgeranyl)glycerol 1-phosphate + (2E,6E,10E)-geranylgeranyl diphosphate = 2,3-bis-O-(geranylgeranyl)-sn-glycerol 1-phosphate + diphosphate. The protein operates within membrane lipid metabolism; glycerophospholipid metabolism. Prenyltransferase that catalyzes the transfer of the geranylgeranyl moiety of geranylgeranyl diphosphate (GGPP) to the C2 hydroxyl of (S)-3-O-geranylgeranylglyceryl phosphate (GGGP). This reaction is the second ether-bond-formation step in the biosynthesis of archaeal membrane lipids. The polypeptide is Digeranylgeranylglyceryl phosphate synthase (Metallosphaera sedula (strain ATCC 51363 / DSM 5348 / JCM 9185 / NBRC 15509 / TH2)).